A 783-amino-acid chain; its full sequence is Protein DWD HYPERSENSITIVE TO UV-B 1 (783 aa).

2 WD repeats span residues 145 to 198 (GEFT…LKLP) and 212 to 256 (SDSS…DPSL). A Nuclear localization signal motif is present at residues 382–389 (RKKESVVR). 6 WD repeats span residues 439 to 480 (DNSR…IFRY), 485 to 525 (GSQS…STVT), 538 to 577 (DEFD…RLQV), 581 to 621 (MHQE…SRPC), 625 to 664 (SSTK…LHLN), and 666 to 710 (EIVP…RRLR).

Interacts directly with DDB1A. Binds to COP1 and RUP1.

It localises to the nucleus. In terms of biological role, may act as a substrate receptor of a CUL4-RING E3 ubiquitin-protein ligase (CRL4) complex involved in the negative regulation of cellular responses to ultraviolet-B (UV-B) illumination, likely in coordination with RUP1. Interacts with COP1 and probably prevents the formation of active UVR8-COP1 complex, thus avoiding UVR8-COP1-mediated positive regulation of UV-B responses. In Arabidopsis thaliana (Mouse-ear cress), this protein is Protein DWD HYPERSENSITIVE TO UV-B 1.